The following is a 508-amino-acid chain: Light-independent protochlorophyllide reductase subunit B (508 aa).

Residue Asp-36 participates in [4Fe-4S] cluster binding. Asp-294 serves as the catalytic Proton donor. 429-430 (GM) is a substrate binding site.

It belongs to the ChlB/BchB/BchZ family. As to quaternary structure, protochlorophyllide reductase is composed of three subunits; ChlL, ChlN and ChlB. Forms a heterotetramer of two ChlB and two ChlN subunits. [4Fe-4S] cluster serves as cofactor.

It catalyses the reaction chlorophyllide a + oxidized 2[4Fe-4S]-[ferredoxin] + 2 ADP + 2 phosphate = protochlorophyllide a + reduced 2[4Fe-4S]-[ferredoxin] + 2 ATP + 2 H2O. It participates in porphyrin-containing compound metabolism; chlorophyll biosynthesis (light-independent). In terms of biological role, component of the dark-operative protochlorophyllide reductase (DPOR) that uses Mg-ATP and reduced ferredoxin to reduce ring D of protochlorophyllide (Pchlide) to form chlorophyllide a (Chlide). This reaction is light-independent. The NB-protein (ChlN-ChlB) is the catalytic component of the complex. The polypeptide is Light-independent protochlorophyllide reductase subunit B (Thermosynechococcus vestitus (strain NIES-2133 / IAM M-273 / BP-1)).